Consider the following 1083-residue polypeptide: Solute carrier family 12 member 7 (1083 aa).

The tract at residues 1 to 55 (MPTNFTVVPVEARADGAGDEAAERTEEPESPESVDQTSPTPGDGNPRENSPFINN) is disordered. Residues 1–119 (MPTNFTVVPV…RREVKAPRMG (119 aa)) lie on the Cytoplasmic side of the membrane. Residues 12–27 (ARADGAGDEAAERTEE) are compositionally biased toward basic and acidic residues. Residues S30 and S33 each carry the phosphoserine modification. T37 bears the Phosphothreonine mark. Residues S50 and S62 each carry the phosphoserine modification. The discontinuously helical transmembrane segment at 120-142 (TFIGVYLPCLQNILGVILFLRLT) threads the bilayer. N131 and I132 together coordinate K(+). Residue V135 coordinates chloride. Topologically, residues 143 to 149 (WIVGAAG) are extracellular. A helical membrane pass occupies residues 150–172 (VMESFLIVAMCCTCTMLTAISMS). Residues 173–196 (AIATNGVVPAGGSYYMISRSLGPE) are Cytoplasmic-facing. The helical transmembrane segment at 197-225 (FGGAVGLCFYLGTTFAGAMYILGTIEIFL) threads the bilayer. Topologically, residues 226 to 249 (TYISPSAAIFQAETADGEAAALLN) are extracellular. 2 consecutive transmembrane segments (helical) span residues 250-271 (NMRV…VGVK) and 272-300 (YVNK…KTAF). The Extracellular portion of the chain corresponds to 301-419 (APPDIPVCLL…PYVLTDIMTY (119 aa)). A glycan (N-linked (GlcNAc...) (high mannose) asparagine) is linked at N312. 2 N-linked (GlcNAc...) (complex) asparagine glycosylation sites follow: N331 and N344. N-linked (GlcNAc...) (high mannose) asparagine glycosylation is present at N360. Residues 420-440 (FTMLVGIYFPSVTGIMAGSNR) traverse the membrane as a helical segment. 2 residues coordinate K(+): P429 and T432. A chloride-binding site is contributed by P429. Residues G433 and I434 each coordinate chloride. Over 441 to 450 (SGDLKDAQKS) the chain is Cytoplasmic. A helical membrane pass occupies residues 451-473 (IPTGTILAIVTTSFIYLSCIVLF). At 474–504 (GACIEGVVLRDKFGEALQGNLVIGMLAWPSP) the chain is on the extracellular side. A helical transmembrane segment spans residues 505–531 (WVIVIGSFFSTCGAGLQSLTGAPRLLQ). At 532–554 (AIARDGIIPFLQVFGHGKANGEP) the chain is on the cytoplasmic side. 2 helical membrane passes run 555–573 (TWAL…LIAS) and 574–598 (LDSV…ACAV). Y589 contacts chloride. The Cytoplasmic portion of the chain corresponds to 599–612 (QTLLRTPNWRPRFK). 2 helical membrane-spanning segments follow: residues 613–635 (FYHW…ICSW) and 636–651 (YYAL…IYKY). Over 652-1083 (IEYRGAEKEW…GGREVITIYS (432 aa)) the chain is Cytoplasmic. Residues 664–680 (GIRGLSLNAARYALLRV) are scissor helix. Phosphothreonine occurs at positions 973 and 980.

It belongs to the SLC12A transporter family. K/Cl co-transporter subfamily. Homodimer; adopts a domain-swap conformation at the scissor helices connecting the transmembrane domain and C-terminal domain. Heterodimer with K-Cl cotransporter SLC12A5. In terms of processing, glycosylation at Asn-331 and Asn-344 is required for proper trafficking to the cell surface, and augments protein stability. Detected in proximal tubules in the kidney, in particular in basolateral membranes of intercalated cells in the cortical collecting duct.

The protein localises to the cell membrane. The enzyme catalyses K(+)(in) + chloride(in) = K(+)(out) + chloride(out). Activated by N-ethylmaleimide (NEM). Inhibited by furosemide, DIDS and bumetanide. The inhibition is much stronger in the presence of 50 mM K(+) in the uptake medium. Inhibited by DIOA. Inhibited by WNK3. In terms of biological role, mediates electroneutral potassium-chloride cotransport when activated by cell swelling. May mediate K(+) uptake into Deiters' cells in the cochlea and contribute to K(+) recycling in the inner ear. Important for the survival of cochlear outer and inner hair cells and the maintenance of the organ of Corti. May be required for basolateral Cl(-) extrusion in the kidney and contribute to renal acidification. The protein is Solute carrier family 12 member 7 (Slc12a7) of Mus musculus (Mouse).